A 309-amino-acid chain; its full sequence is Maintenance of mitochondrial morphology protein 1 (309 aa).

At 1-16 (MGNAYIFSLQPTFTQG) the chain is on the lumenal side. A helical transmembrane segment spans residues 17-37 (LILGQFSILFLLVLVLKYLFF). Over 38–309 (DTVSDHAYRT…EQQAGELPVN (272 aa)) the chain is Cytoplasmic. An SMP-LTD domain is found at 84–293 (ECESADWLNA…LPGLASVSEV (210 aa)).

Belongs to the MMM1 family. In terms of assembly, homodimer. Component of the ER-mitochondria encounter structure (ERMES) or MDM complex, composed of MMM1, MDM10, MDM12 and MDM34. An MMM1 homodimer associates with one molecule of MDM12 on each side in a pairwise head-to-tail manner, and the SMP-LTD domains of MMM1 and MDM12 generate a continuous hydrophobic tunnel for phospholipid trafficking.

It localises to the endoplasmic reticulum membrane. In terms of biological role, component of the ERMES/MDM complex, which serves as a molecular tether to connect the endoplasmic reticulum (ER) and mitochondria. Components of this complex are involved in the control of mitochondrial shape and protein biogenesis, and function in nonvesicular lipid trafficking between the ER and mitochondria. The MDM12-MMM1 subcomplex functions in the major beta-barrel assembly pathway that is responsible for biogenesis of all outer membrane beta-barrel proteins, and acts in a late step after the SAM complex. The MDM10-MDM12-MMM1 subcomplex further acts in the TOM40-specific pathway after the action of the MDM12-MMM1 complex. Essential for establishing and maintaining the structure of mitochondria and maintenance of mtDNA nucleoids. The sequence is that of Maintenance of mitochondrial morphology protein 1 from Postia placenta (strain ATCC 44394 / Madison 698-R) (Brown rot fungus).